A 319-amino-acid polypeptide reads, in one-letter code: Curved DNA-binding protein (319 aa).

The J domain maps to 5 to 69 (DYYKILGVEP…QKRAEFDEIR (65 aa)).

The protein localises to the cytoplasm. It is found in the nucleoid. Functionally, DNA-binding protein that preferentially recognizes a curved DNA sequence. It is probably a functional analog of DnaJ; displays overlapping activities with DnaJ, but functions under different conditions, probably acting as a molecular chaperone in an adaptive response to environmental stresses other than heat shock. Lacks autonomous chaperone activity; binds native substrates and targets them for recognition by DnaK. Its activity is inhibited by the binding of CbpM. The chain is Curved DNA-binding protein from Pseudomonas putida (strain ATCC 700007 / DSM 6899 / JCM 31910 / BCRC 17059 / LMG 24140 / F1).